The following is a 1088-amino-acid chain: RNA-directed RNA polymerase (1088 aa).

Residues 501–687 (LSYGDVTRFL…AKRYIAGGKI (187 aa)) enclose the RdRp catalytic domain.

The protein belongs to the reoviridae RNA-directed RNA polymerase family. In terms of assembly, interacts with VP3 (Potential). Interacts with VP2; this interaction activates VP1. Interacts with NSP5; this interaction is probably necessary for the formation of functional virus factories. Interacts with NSP2; this interaction is weak. Mg(2+) serves as cofactor.

The protein resides in the virion. The catalysed reaction is RNA(n) + a ribonucleoside 5'-triphosphate = RNA(n+1) + diphosphate. RNA-directed RNA polymerase that is involved in both transcription and genome replication. Together with VP3 capping enzyme, forms an enzyme complex positioned near the channels situated at each of the five-fold vertices of the core. Following infection, the outermost layer of the virus is lost, leaving a double-layered particle (DLP) made up of the core and VP6 shell. VP1 then catalyzes the transcription of fully conservative plus-strand genomic RNAs that are extruded through the DLP's channels into the cytoplasm where they function as mRNAs for translation of viral proteins. One copy of each of the viral (+)RNAs is also recruited during core assembly, together with newly synthesized polymerase complexes and VP2. The polymerase of these novo-formed particles catalyzes the synthesis of complementary minus-strands leading to dsRNA formation. To do so, the polymerase specifically recognizes and binds 4 bases 5'-UGUG-3' in the conserved 3'-sequence of plus-strand RNA templates. VP2 presumably activates the autoinhibited VP1-RNA complex to coordinate packaging and genome replication. Once dsRNA synthesis is complete, the polymerase switches to the transcriptional mode, thus providing secondary transcription. The sequence is that of RNA-directed RNA polymerase from Rotavirus A (isolate RVA/Human/United States/WI61/1983/G9P1A[8]) (RV-A).